The chain runs to 407 residues: Serine/threonine transporter SstT (407 aa).

9 helical membrane passes run 11–31 (IIHGSLVLQIIVGIALAVILA), 43–63 (FLGDFFVGALKAIAPILVFVL), 82–102 (IISLYLIGTFAAALTAVLLSF), 141–161 (ALMTGNYIGILAWGIGLGIAL), 192–212 (LGIFGLVAGTVAATGFDALAG), 216–236 (LLMVLVGAMLIMALVVNPLIV), 298–318 (MGGAAITITVLTLAAAHTLGV), 339–359 (ASGVAGGSLLLIPLACSLFGI), and 363–383 (IAMQVVAVGFIIGVVQDSAET).

Belongs to the dicarboxylate/amino acid:cation symporter (DAACS) (TC 2.A.23) family.

It is found in the cell inner membrane. It carries out the reaction L-serine(in) + Na(+)(in) = L-serine(out) + Na(+)(out). The catalysed reaction is L-threonine(in) + Na(+)(in) = L-threonine(out) + Na(+)(out). In terms of biological role, involved in the import of serine and threonine into the cell, with the concomitant import of sodium (symport system). This is Serine/threonine transporter SstT from Shewanella denitrificans (strain OS217 / ATCC BAA-1090 / DSM 15013).